The chain runs to 416 residues: Cell division control protein 3 (416 aa).

The Septin-type G domain maps to 32-307 (RGFSLNIMAI…ENYRTEKLKR (276 aa)). Residues 42–49 (GESGLGKA) are G1 motif. GTP is bound by residues 42 to 49 (GESGLGKA), serine 79, glycine 105, 184 to 192 (KSDTLTDEE), glycine 240, and arginine 256. The segment at 102 to 105 (TAPG) is G3 motif. The interval 183 to 186 (AKSD) is G4 motif. Residues 323–399 (AAKQEEERAL…QLEKQKLLPQ (77 aa)) adopt a coiled-coil conformation. The segment at 392–416 (EKQKLLPQDPPAQPAPQKSRKGFLR) is disordered.

The protein belongs to the TRAFAC class TrmE-Era-EngA-EngB-Septin-like GTPase superfamily. Septin GTPase family.

It is found in the bud neck. Functionally, plays a role in the cell cycle. Involved in the formation of the ring of filaments in the neck region at the mother-bud junction during mitosis. The protein is Cell division control protein 3 (CDC3) of Candida albicans (Yeast).